A 909-amino-acid chain; its full sequence is Lon protease homolog 2, peroxisomal (909 aa).

The 230-residue stretch at 1-230 (MAPVRAPTAR…KVIELLDRQV (230 aa)) folds into the Lon N-terminal domain. Residues 249 to 269 (FPMDPDSTKPGKVKPPVKAPG) are disordered. ATP is bound at residue 463–470 (GPPGVGKT). A Lon proteolytic domain is found at 706–893 (TSRPGIVTGL…WEAIRYVWPD (188 aa)). Active-site residues include serine 799 and lysine 842. Residues 907-909 (SRL) carry the Microbody targeting signal motif.

It belongs to the peptidase S16 family.

It is found in the peroxisome matrix. It localises to the cytoplasm. It carries out the reaction Hydrolysis of proteins in presence of ATP.. Its function is as follows. ATP-dependent serine protease that mediates the selective degradation of misfolded and unassembled polypeptides in the peroxisomal matrix. Necessary for type 2 peroxisome targeting signal (PTS2)-containing protein processing and facilitates peroxisome matrix protein import. The polypeptide is Lon protease homolog 2, peroxisomal (Sordaria macrospora (strain ATCC MYA-333 / DSM 997 / K(L3346) / K-hell)).